We begin with the raw amino-acid sequence, 104 residues long: Large ribosomal subunit protein eL30 (104 aa).

It belongs to the eukaryotic ribosomal protein eL30 family.

This is Large ribosomal subunit protein eL30 (RPL30) from Tetrahymena thermophila (strain SB210).